Here is a 396-residue protein sequence, read N- to C-terminus: Elongation factor Tu (396 aa).

Residues 10 to 206 (KPHCNIGTIG…NVDEYIPQPE (197 aa)) form the tr-type G domain. The segment at 19 to 26 (GHVDHGKT) is G1. 19-26 (GHVDHGKT) is a GTP binding site. Thr26 is a binding site for Mg(2+). The interval 60–64 (GITIS) is G2. A G3 region spans residues 81–84 (DCPG). GTP contacts are provided by residues 81 to 85 (DCPGH) and 136 to 139 (NKCD). The G4 stretch occupies residues 136–139 (NKCD). The G5 stretch occupies residues 174 to 176 (SAL).

This sequence belongs to the TRAFAC class translation factor GTPase superfamily. Classic translation factor GTPase family. EF-Tu/EF-1A subfamily. In terms of assembly, monomer.

It localises to the cytoplasm. It carries out the reaction GTP + H2O = GDP + phosphate + H(+). Its function is as follows. GTP hydrolase that promotes the GTP-dependent binding of aminoacyl-tRNA to the A-site of ribosomes during protein biosynthesis. This Bradyrhizobium diazoefficiens (strain JCM 10833 / BCRC 13528 / IAM 13628 / NBRC 14792 / USDA 110) protein is Elongation factor Tu.